Here is a 329-residue protein sequence, read N- to C-terminus: Myoblast determination protein 1 homolog (329 aa).

Residues 160 to 211 (DRRKAATMRERRRLRKVNEAFEVVKQRTCPNPNQRLPKVEILRSAIDYINTL) form the bHLH domain. A disordered region spans residues 256–279 (NPDGPNVYDDEDLSDTDEDRDHHH). Residues 263–273 (YDDEDLSDTDE) are compositionally biased toward acidic residues.

In terms of assembly, efficient DNA binding requires dimerization with another bHLH protein. As to expression, body wall muscle cells; in clonal muscle precursors, in a set of early embryonic blastomeres (the ms-granddaughters), and in six glial-like cells called GLRS.

It is found in the nucleus. In terms of biological role, accumulation defines the body wall muscle cell fate during embryogenesis. This Caenorhabditis briggsae protein is Myoblast determination protein 1 homolog (hlh-1).